A 122-amino-acid polypeptide reads, in one-letter code: Large ribosomal subunit protein uL14 (122 aa).

It belongs to the universal ribosomal protein uL14 family. Part of the 50S ribosomal subunit. Forms a cluster with proteins L3 and L19. In the 70S ribosome, L14 and L19 interact and together make contacts with the 16S rRNA in bridges B5 and B8.

Functionally, binds to 23S rRNA. Forms part of two intersubunit bridges in the 70S ribosome. The polypeptide is Large ribosomal subunit protein uL14 (Corynebacterium diphtheriae (strain ATCC 700971 / NCTC 13129 / Biotype gravis)).